The primary structure comprises 385 residues: Branched-chain-amino-acid aminotransferase, cytosolic (385 aa).

Lys221 bears the N6-(pyridoxal phosphate)lysine mark.

This sequence belongs to the class-IV pyridoxal-phosphate-dependent aminotransferase family. As to quaternary structure, homodimer. Requires pyridoxal 5'-phosphate as cofactor. In terms of tissue distribution, expressed in muscles.

The protein localises to the cytoplasm. The catalysed reaction is L-leucine + 2-oxoglutarate = 4-methyl-2-oxopentanoate + L-glutamate. It catalyses the reaction L-isoleucine + 2-oxoglutarate = (S)-3-methyl-2-oxopentanoate + L-glutamate. The enzyme catalyses L-valine + 2-oxoglutarate = 3-methyl-2-oxobutanoate + L-glutamate. Functionally, catalyzes the first reaction in the catabolism of the essential branched chain amino acids leucine, isoleucine, and valine. This is Branched-chain-amino-acid aminotransferase, cytosolic (BCAT1) from Ovis aries (Sheep).